A 289-amino-acid chain; its full sequence is Release factor glutamine methyltransferase (289 aa).

S-adenosyl-L-methionine-binding positions include 122-126, aspartate 145, tryptophan 174, and asparagine 189; that span reads GVGSG. 189–192 contacts substrate; that stretch reads NPPY.

This sequence belongs to the protein N5-glutamine methyltransferase family. PrmC subfamily.

The catalysed reaction is L-glutaminyl-[peptide chain release factor] + S-adenosyl-L-methionine = N(5)-methyl-L-glutaminyl-[peptide chain release factor] + S-adenosyl-L-homocysteine + H(+). In terms of biological role, methylates the class 1 translation termination release factors RF1/PrfA and RF2/PrfB on the glutamine residue of the universally conserved GGQ motif. The sequence is that of Release factor glutamine methyltransferase from Caulobacter vibrioides (strain ATCC 19089 / CIP 103742 / CB 15) (Caulobacter crescentus).